The sequence spans 566 residues: Deformed epidermal autoregulatory factor 1 homolog (566 aa).

Disordered regions lie at residues 33–62 (AESEAEEPVLSRDEDSEEDADSEAERETRR) and 163–191 (GLKGPAAPLTPGPQSPPTPLAPGQEKGGT). Residues 170-182 (PLTPGPQSPPTPL) are compositionally biased toward pro residues. Position 172 is a phosphothreonine (threonine 172). At serine 177 the chain carries Phosphoserine. Residue threonine 180 is modified to Phosphothreonine. An SAND domain is found at 194–274 (NWDPSVYDSE…QCLIQDGILN (81 aa)). The Nuclear localization signal signature appears at 300 to 306 (PYKRRKK). An interaction with LMO4 region spans residues 404–479 (IAPFPEAALP…QLKTLFEQAK (76 aa)). At threonine 433 the chain carries Phosphothreonine. Phosphoserine occurs at positions 444 and 449. Zn(2+) contacts are provided by cysteine 505, cysteine 508, cysteine 516, cysteine 519, cysteine 525, cysteine 529, histidine 537, and cysteine 541. An MYND-type zinc finger spans residues 505–541 (CVNCGREAMSECTGCHKVNYCSTFCQRKDWKDHQHVC).

In terms of assembly, homodimer. Isoform 1 and isoform 2 may form a heterodimer. May interact with the corepressors NCOR1 and NCRO2. Identified in a complex with XRCC5 and XRCC6. Interacts (via the SAND domain) with the DNA-PK complex subunit XRCC6; the interaction is direct with XRCC6 and may be inhibited by DNA-binding. Interacts with LMO4; LMO4 blocks export from nucleus. Interacts with LMO2 and CLIM2. In terms of processing, may be phosphorylated by DNA-PK complex in a DNA independent manner (in vitro). As to expression, ubiquitously expressed during embryogenesis, with higher expression in regions of the central nervous system, dorsal root ganglia, submandibular gland, epidermis and breast. In 12-week-old NOD mice, expression of isoform 2 is sevenfold higher in lymph node stromal elements than in T-cells and tenfold higher than in B-cells.

The protein localises to the nucleus. It is found in the cytoplasm. Transcription factor that binds to sequence with multiple copies of 5'-TTC[CG]G-3' present in its own promoter and that of the HNRPA2B1 gene. Down-regulates transcription of these genes. Binds to the retinoic acid response element (RARE) 5'-AGGGTTCACCGAAAGTTCA-3'. Activates the proenkephalin gene independently of promoter binding, probably through protein-protein interaction. Regulates epithelial cell proliferation and side-branching in the mammary gland. Required for neural tube closure and skeletal patterning. Controls the expression of peripheral tissue antigens in pancreatic lymph nodes. Isoform 1 displays greater transcriptional activity than isoform 2. Isoform 2 may inhibit transcriptional activity of isoform 1 by interacting with it and retaining it in the cytoplasm. Transcriptional activator of EIF4G3. May also involved in behavior. In Mus musculus (Mouse), this protein is Deformed epidermal autoregulatory factor 1 homolog (Deaf1).